The sequence spans 60 residues: ATP synthase subunit J, mitochondrial (60 aa).

Residues 13–32 form a helical membrane-spanning segment; that stretch reads ILKPMLPFFLGGAIVFYGTV.

This sequence belongs to the ATPase j subunit family. In terms of assembly, F-type ATPases have 2 components, CF(1) - the catalytic core - and CF(0) - the membrane proton channel. In yeast, the dimeric form of ATP synthase consists of 17 polypeptides: alpha, beta, gamma, delta, epsilon, 4 (B), 5 (OSCP), 6 (A), 8, 9 (C), d, E (Tim11), f, g, h, i/j and k.

The protein localises to the mitochondrion membrane. In terms of biological role, mitochondrial membrane ATP synthase (F(1)F(0) ATP synthase or Complex V) produces ATP from ADP in the presence of a proton gradient across the membrane which is generated by electron transport complexes of the respiratory chain. F-type ATPases consist of two structural domains, F(1) - containing the extramembraneous catalytic core and F(0) - containing the membrane proton channel, linked together by a central stalk and a peripheral stalk. During catalysis, ATP synthesis in the catalytic domain of F(1) is coupled via a rotary mechanism of the central stalk subunits to proton translocation. Part of the complex F(0) domain. Minor subunit located with subunit a in the membrane. The sequence is that of ATP synthase subunit J, mitochondrial (atp18) from Schizosaccharomyces pombe (strain 972 / ATCC 24843) (Fission yeast).